We begin with the raw amino-acid sequence, 241 residues long: L-aspartate dehydrogenase (241 aa).

NAD(+) is bound by residues 10-11 (NI), Asp28, 56-57 (AS), 63-64 (EY), 78-79 (IS), Ala109, and Asn164. His193 is a catalytic residue.

The protein belongs to the L-aspartate dehydrogenase family. Homodimer.

The enzyme catalyses L-aspartate + NADP(+) + H2O = oxaloacetate + NH4(+) + NADPH + H(+). The catalysed reaction is L-aspartate + NAD(+) + H2O = oxaloacetate + NH4(+) + NADH + H(+). It participates in cofactor biosynthesis; NAD(+) biosynthesis; iminoaspartate from L-aspartate (dehydrogenase route): step 1/1. With respect to regulation, competitively inhibited by L-malate and NH(4)(+). Its function is as follows. Specifically catalyzes the NAD or NADP-dependent dehydrogenation of L-aspartate to iminoaspartate. Does not show aspartate oxidase activity. Is also able to catalyze the reverse reaction, i.e. the reductive amination of oxaloacetate. This Thermotoga maritima (strain ATCC 43589 / DSM 3109 / JCM 10099 / NBRC 100826 / MSB8) protein is L-aspartate dehydrogenase.